Here is a 267-residue protein sequence, read N- to C-terminus: MRRIAVMGAAGRMGKTLIEAVQQTPGAGLTAAIDRPDSSLVGADAGELAALGRIGVLLSDDLAKVADEFDVLIDFTHPSVTLKNLAFCRKHGKAMIIGTTGFTVEEKQLLAEAGKDIPIVFAANFSVGVNLSLKLLDMAARVLGDDVDIEIIEAHHRHKVDAPSGTALRMGEVVANALGRDLQEVAVYGREGQTGARDRKTIGFATVRAGDVVGDHTVLFAAEGERLEITHKASSRMTFAKGAVRAALWLDGREPGLYDMQDVLELR.

NAD(+) is bound by residues 8–13 (GAAGRM) and Asp-34. Arg-35 contacts NADP(+). Residues 98 to 100 (GTT) and 122 to 125 (AANF) contribute to the NAD(+) site. The active-site Proton donor/acceptor is the His-155. His-156 is a (S)-2,3,4,5-tetrahydrodipicolinate binding site. Catalysis depends on Lys-159, which acts as the Proton donor. 165 to 166 (GT) is a binding site for (S)-2,3,4,5-tetrahydrodipicolinate.

This sequence belongs to the DapB family.

Its subcellular location is the cytoplasm. It carries out the reaction (S)-2,3,4,5-tetrahydrodipicolinate + NAD(+) + H2O = (2S,4S)-4-hydroxy-2,3,4,5-tetrahydrodipicolinate + NADH + H(+). The enzyme catalyses (S)-2,3,4,5-tetrahydrodipicolinate + NADP(+) + H2O = (2S,4S)-4-hydroxy-2,3,4,5-tetrahydrodipicolinate + NADPH + H(+). The protein operates within amino-acid biosynthesis; L-lysine biosynthesis via DAP pathway; (S)-tetrahydrodipicolinate from L-aspartate: step 4/4. Its function is as follows. Catalyzes the conversion of 4-hydroxy-tetrahydrodipicolinate (HTPA) to tetrahydrodipicolinate. This is 4-hydroxy-tetrahydrodipicolinate reductase from Pseudomonas putida (strain ATCC 47054 / DSM 6125 / CFBP 8728 / NCIMB 11950 / KT2440).